Reading from the N-terminus, the 390-residue chain is O-phospho-L-seryl-tRNA:Cys-tRNA synthase 2 (390 aa).

Residues 83–84, Asn187, and 210–212 each bind pyridoxal 5'-phosphate; these read AR and SGH. Lys213 bears the N6-(pyridoxal phosphate)lysine mark.

This sequence belongs to the SepCysS family. In terms of assembly, homodimer. Interacts with SepRS. Pyridoxal 5'-phosphate serves as cofactor.

The catalysed reaction is O-phospho-L-seryl-tRNA(Cys) + hydrogen sulfide + H(+) = L-cysteinyl-tRNA(Cys) + phosphate. Converts O-phospho-L-seryl-tRNA(Cys) (Sep-tRNA(Cys)) to L-cysteinyl-tRNA(Cys) (Cys-tRNA(Cys)). In Archaeoglobus fulgidus (strain ATCC 49558 / DSM 4304 / JCM 9628 / NBRC 100126 / VC-16), this protein is O-phospho-L-seryl-tRNA:Cys-tRNA synthase 2.